The chain runs to 627 residues: Alpha-terpineol synthase, chloroplastic (627 aa).

The transit peptide at 1–53 directs the protein to the chloroplast; that stretch reads MAGITGVMNMKLAARPSSGRHSRGCRPAVVPSAGKQMLLVRRHPPGSASWPTR. The interval 13-90 is disordered; it reads AARPSSGRHS…EDRASRNTSS (78 aa). (2E)-geranyl diphosphate is bound by residues Arg-339, Asp-376, Asp-380, Arg-518, and Asp-521. The Mg(2+) site is built by Asp-376 and Asp-380. A DDXXD motif motif is present at residues 376–380; sequence DDTYD. Mg(2+) contacts are provided by Asp-521, Ser-525, and Glu-529.

Belongs to the terpene synthase family. Tpsb subfamily. In terms of assembly, monomer. Mg(2+) serves as cofactor. Requires Mn(2+) as cofactor. Expressed in seedling leaf sheaths and roots.

Its subcellular location is the plastid. The protein resides in the chloroplast. The catalysed reaction is (2E)-geranyl diphosphate + H2O = (S)-alpha-terpineol + diphosphate. The enzyme catalyses (2E)-geranyl diphosphate = (4S)-limonene + diphosphate. It carries out the reaction (2E)-geranyl diphosphate = gamma-terpinene + diphosphate. It catalyses the reaction (2E)-geranyl diphosphate = beta-myrcene + diphosphate. The catalysed reaction is (2E)-geranyl diphosphate = terpinolene + diphosphate. The enzyme catalyses (2E)-geranyl diphosphate + H2O = 4-terpineol + diphosphate. It functions in the pathway secondary metabolite biosynthesis; terpenoid biosynthesis. Functionally, component of the volatile terpenes biosynthesis pathways. Mediates the synthesis of a blend of monoterpenes. Converts mainly geranyl diphosphate to alpha-terpineol. Also triggers the biosynthesis of minor monoterpenes including limonene, gamma-terpinene, beta-myrcene, terpinolene and 4-terpineol. The sequence is that of Alpha-terpineol synthase, chloroplastic from Zea mays (Maize).